The following is a 359-amino-acid chain: Nicotinate-nucleotide--dimethylbenzimidazole phosphoribosyltransferase (359 aa).

Glutamate 318 serves as the catalytic Proton acceptor.

Belongs to the CobT family. As to quaternary structure, homodimer.

The enzyme catalyses 5,6-dimethylbenzimidazole + nicotinate beta-D-ribonucleotide = alpha-ribazole 5'-phosphate + nicotinate + H(+). The protein operates within nucleoside biosynthesis; alpha-ribazole biosynthesis; alpha-ribazole from 5,6-dimethylbenzimidazole: step 1/2. Its function is as follows. Catalyzes the synthesis of alpha-ribazole-5'-phosphate from nicotinate mononucleotide (NAMN) and 5,6-dimethylbenzimidazole (DMB). The polypeptide is Nicotinate-nucleotide--dimethylbenzimidazole phosphoribosyltransferase (Escherichia coli O9:H4 (strain HS)).